Here is a 708-residue protein sequence, read N- to C-terminus: Prolyl 3-hydroxylase 2 (708 aa).

Positions Met-1–Gly-24 are cleaved as a signal peptide. TPR repeat units lie at residues Phe-44–Leu-77, Arg-148–His-181, His-210–Glu-243, and Pro-306–Asp-339. 2 N-linked (GlcNAc...) asparagine glycosylation sites follow: Asn-449 and Asn-549. The region spanning Thr-557 to Leu-671 is the Fe2OG dioxygenase domain. Positions 580, 582, and 652 each coordinate Fe cation. The active site involves Arg-662. The Prevents secretion from ER motif lies at Lys-705–Leu-708.

It belongs to the leprecan family. The cofactor is Fe cation. L-ascorbate is required as a cofactor. Expression localized to the epithelia of bile ducts and to the sacroplasm of heart muscle and skeletal muscle. In the pancreas, localized to a subpopulation of Langerhans islet cells and in the salivary gland, expressed in acinar cells (at protein level). Expressed in adult heart, placenta, lung, liver, skeletal muscle and kidney. Detected in fetal heart, spleen, lung, liver skeletal muscle and kidney.

The protein localises to the endoplasmic reticulum. Its subcellular location is the sarcoplasmic reticulum. The protein resides in the golgi apparatus. The enzyme catalyses L-prolyl-[collagen] + 2-oxoglutarate + O2 = trans-3-hydroxy-L-prolyl-[collagen] + succinate + CO2. Its activity is regulated as follows. Inhibited by pyridine 2,4-dicarboxylate, an analog of 2-oxoglutarate. Prolyl 3-hydroxylase that catalyzes the post-translational formation of 3-hydroxyproline on collagens. Contributes to proline 3-hydroxylation of collagen COL4A1 and COL1A1 in tendons, the eye sclera and in the eye lens capsule. Has high activity with the type IV collagen COL4A1, and lower activity with COL1A1. Catalyzes hydroxylation of the first Pro in Gly-Pro-Hyp sequences where Hyp is 4-hydroxyproline. Has no activity on substrates that lack 4-hydroxyproline in the third position. The chain is Prolyl 3-hydroxylase 2 from Homo sapiens (Human).